Consider the following 623-residue polypeptide: Peptidoglycan D,D-transpeptidase MrdA (623 aa).

The chain crosses the membrane as a helical span at residues 17 to 37; the sequence is VIVAFGVVVVCFGILIFNLYN. The active-site Acyl-ester intermediate is the Ser326.

Belongs to the transpeptidase family. MrdA subfamily.

The protein resides in the cell inner membrane. It catalyses the reaction Preferential cleavage: (Ac)2-L-Lys-D-Ala-|-D-Ala. Also transpeptidation of peptidyl-alanyl moieties that are N-acyl substituents of D-alanine.. Its pathway is cell wall biogenesis; peptidoglycan biosynthesis. Functionally, catalyzes cross-linking of the peptidoglycan cell wall. In Salmonella typhimurium (strain SL1344), this protein is Peptidoglycan D,D-transpeptidase MrdA.